A 59-amino-acid polypeptide reads, in one-letter code: Large ribosomal subunit protein uL30 (59 aa).

This sequence belongs to the universal ribosomal protein uL30 family. Part of the 50S ribosomal subunit.

The protein is Large ribosomal subunit protein uL30 of Clostridium botulinum (strain Alaska E43 / Type E3).